The chain runs to 141 residues: NADPH-dependent 7-cyano-7-deazaguanine reductase (141 aa).

Cys34 (thioimide intermediate) is an active-site residue. Asp41 acts as the Proton donor in catalysis. Residues 56–58 (VEL) and 75–76 (HE) each bind substrate.

The protein belongs to the GTP cyclohydrolase I family. QueF type 1 subfamily.

The protein resides in the cytoplasm. The catalysed reaction is 7-aminomethyl-7-carbaguanine + 2 NADP(+) = 7-cyano-7-deazaguanine + 2 NADPH + 3 H(+). The protein operates within tRNA modification; tRNA-queuosine biosynthesis. In terms of biological role, catalyzes the NADPH-dependent reduction of 7-cyano-7-deazaguanine (preQ0) to 7-aminomethyl-7-deazaguanine (preQ1). This is NADPH-dependent 7-cyano-7-deazaguanine reductase from Acidithiobacillus ferrooxidans (strain ATCC 23270 / DSM 14882 / CIP 104768 / NCIMB 8455) (Ferrobacillus ferrooxidans (strain ATCC 23270)).